The following is a 230-amino-acid chain: 5'-methylthioadenosine/S-adenosylhomocysteine nucleosidase (230 aa).

Glu12 (proton acceptor) is an active-site residue. Substrate is bound by residues Gly78, Ile153, and 174–175; that span reads ME. Catalysis depends on Asp198, which acts as the Proton donor.

This sequence belongs to the PNP/UDP phosphorylase family. MtnN subfamily.

The catalysed reaction is S-adenosyl-L-homocysteine + H2O = S-(5-deoxy-D-ribos-5-yl)-L-homocysteine + adenine. The enzyme catalyses S-methyl-5'-thioadenosine + H2O = 5-(methylsulfanyl)-D-ribose + adenine. It carries out the reaction 5'-deoxyadenosine + H2O = 5-deoxy-D-ribose + adenine. Its pathway is amino-acid biosynthesis; L-methionine biosynthesis via salvage pathway; S-methyl-5-thio-alpha-D-ribose 1-phosphate from S-methyl-5'-thioadenosine (hydrolase route): step 1/2. Its function is as follows. Catalyzes the irreversible cleavage of the glycosidic bond in both 5'-methylthioadenosine (MTA) and S-adenosylhomocysteine (SAH/AdoHcy) to adenine and the corresponding thioribose, 5'-methylthioribose and S-ribosylhomocysteine, respectively. Also cleaves 5'-deoxyadenosine, a toxic by-product of radical S-adenosylmethionine (SAM) enzymes, into 5-deoxyribose and adenine. The chain is 5'-methylthioadenosine/S-adenosylhomocysteine nucleosidase from Shewanella pealeana (strain ATCC 700345 / ANG-SQ1).